A 678-amino-acid polypeptide reads, in one-letter code: WD repeat-containing protein 48 (678 aa).

WD repeat units follow at residues 28 to 67 (YNRN…QDPY), 73 to 112 (HHTD…CMST), 115 to 154 (THKD…ALTA), 166 to 205 (GNKD…KLMK), 208 to 247 (GHTD…CIAT), 250 to 289 (VHDE…IRLL), 292 to 334 (EEKA…NFRS), and 358 to 397 (KGGA…KVED). Residues 608–629 (VDTESQTTSSSNNEKPGEQEKE) form a disordered region. The segment covering 610–621 (TESQTTSSSNNE) has biased composition (low complexity).

This sequence belongs to the WD repeat WDR48 family.

It localises to the nucleus. It is found in the cytoplasm. The protein localises to the lysosome. The protein resides in the late endosome. In terms of biological role, regulator of deubiquitinating complexes, which acts as a strong activator of usp1, usp12 and usp46. Enhances the usp1-mediated deubiquitination of fancd2; usp1 being almost inactive by itself. Activates deubiquitination by increasing the catalytic turnover without increasing the affinity of deubiquitinating enzymes for the substrate. Also activates deubiquitinating activity of complexes containing usp12. Together with rad51ap1, promotes DNA repair by stimulating rad51-mediated homologous recombination. Binds single-stranded DNA (ssDNA) and double-stranded DNA (dsDNA). DNA-binding is required both for usp1-mediated deubiquitination of fancd2 and stimulation of rad51-mediated homologous recombination: both wdr48/uaf1 and rad51ap1 have coordinated role in DNA-binding during these processes. Together with atad5 and by regulating usp1 activity, has a role in pcna-mediated translesion synthesis (TLS) by deubiquitinating monoubiquitinated pcna. Together with atad5, has a role in recruiting rad51 to stalled forks during replication stress. This is WD repeat-containing protein 48 (wdr48) from Xenopus tropicalis (Western clawed frog).